A 659-amino-acid polypeptide reads, in one-letter code: Biosynthetic arginine decarboxylase 2 (659 aa).

An N6-(pyridoxal phosphate)lysine modification is found at K119. 311-321 (LNVGGGLAVDY) lines the substrate pocket.

It belongs to the Orn/Lys/Arg decarboxylase class-II family. SpeA subfamily. Mg(2+) is required as a cofactor. Requires pyridoxal 5'-phosphate as cofactor.

It catalyses the reaction L-arginine + H(+) = agmatine + CO2. Its function is as follows. Catalyzes the biosynthesis of agmatine from arginine. This chain is Biosynthetic arginine decarboxylase 2 (speA2), found in Synechocystis sp. (strain ATCC 27184 / PCC 6803 / Kazusa).